We begin with the raw amino-acid sequence, 28 residues long: MAPRGFSCLLLSTSEIDLPVKRLLSSVF.

It belongs to the humanin family. In terms of tissue distribution, highly expressed in testis. Also expressed in kidney, heart, skeletal muscles and brain.

It localises to the secreted. It is found in the cytoplasm. In terms of biological role, plays a role as a neuroprotective and antiapoptotic factor. In Homo sapiens (Human), this protein is Humanin-like 2.